Here is a 205-residue protein sequence, read N- to C-terminus: Molybdenum cofactor guanylyltransferase (205 aa).

Residues 14 to 16 (LAG), K27, D77, and D107 each bind GTP. Residue D107 participates in Mg(2+) binding.

Belongs to the MobA family. Monomer. The cofactor is Mg(2+).

The protein resides in the cytoplasm. The enzyme catalyses Mo-molybdopterin + GTP + H(+) = Mo-molybdopterin guanine dinucleotide + diphosphate. Its function is as follows. Transfers a GMP moiety from GTP to Mo-molybdopterin (Mo-MPT) cofactor (Moco or molybdenum cofactor) to form Mo-molybdopterin guanine dinucleotide (Mo-MGD) cofactor. This Burkholderia orbicola (strain MC0-3) protein is Molybdenum cofactor guanylyltransferase.